A 251-amino-acid polypeptide reads, in one-letter code: Triosephosphate isomerase (251 aa).

Residue 9-11 (NWK) participates in substrate binding. The active-site Electrophile is His95. The Proton acceptor role is filled by Glu167. Substrate contacts are provided by residues Gly173, Ser213, and 234–235 (GG). Ser213 bears the Phosphoserine mark.

The protein belongs to the triosephosphate isomerase family. Homodimer.

The protein localises to the cytoplasm. The catalysed reaction is D-glyceraldehyde 3-phosphate = dihydroxyacetone phosphate. It participates in carbohydrate biosynthesis; gluconeogenesis. The protein operates within carbohydrate degradation; glycolysis; D-glyceraldehyde 3-phosphate from glycerone phosphate: step 1/1. Functionally, involved in the gluconeogenesis. Catalyzes stereospecifically the conversion of dihydroxyacetone phosphate (DHAP) to D-glyceraldehyde-3-phosphate (G3P). In Bacillus cereus (strain B4264), this protein is Triosephosphate isomerase.